The following is a 269-amino-acid chain: 4-chlorobenzoyl coenzyme A dehalogenase (269 aa).

Substrate is bound by residues arginine 24 and 62–67 (AGFYLR). Catalysis depends on histidine 90, which acts as the Proton acceptor. Residue glycine 114 coordinates substrate. Aspartate 145 (nucleophile) is an active-site residue. Arginine 257 lines the substrate pocket.

The protein belongs to the enoyl-CoA hydratase/isomerase family. In terms of assembly, homotetramer. Homotetramer, homooctamer and larger multimers. Homotrimer.

The catalysed reaction is 4-chlorobenzoyl-CoA + H2O = 4-hydroxybenzoyl-CoA + chloride + H(+). The protein operates within xenobiotic degradation; 4-chlorobenzoate degradation; 4-hydroxybenzoate from 4-chlorobenzoate: step 2/3. With respect to regulation, inactivated by 1 mM Ag(+) and by 5 mM Cu(2+). Partially inhibited by 5 mM Zn(2+), Mn(2+), Co(2+), Fe(2+) and Ni(2+). Unaffected by 10 mM Na(+), K(+) and Li(+) and by 0.5 mM Mg(2+), Mn(2+), Fe(2+), Ca(2+), Co(2+) and Zn(2+). Inhibited by the sulfhydryl blocking agent 5,5'-dithio-bis-(2-nitrobenzoate), SDS and N-bromosuccinimide. Unaffected by sodium azide and EDTA. Inactivated following treatment with diethyl pyrocarbonate; this inactivation is reversible by treatment with hydroxylamine. In terms of biological role, dehalogenates 4-chlorobenzoyl-CoA, 4-iodobenzoyl-CoA and 4-bromobenzoyl-CoA, but not 4-fluorobenzoyl-CoA. Inactive towards crotonyl-CoA, alpha-methylcrotonyl-CoA and beta-methylcrotonyl-CoA. The polypeptide is 4-chlorobenzoyl coenzyme A dehalogenase (Pseudomonas sp. (strain CBS-3)).